An 89-amino-acid chain; its full sequence is Elongation factor 1-beta (89 aa).

Belongs to the EF-1-beta/EF-1-delta family.

Functionally, promotes the exchange of GDP for GTP in EF-1-alpha/GDP, thus allowing the regeneration of EF-1-alpha/GTP that could then be used to form the ternary complex EF-1-alpha/GTP/AAtRNA. This is Elongation factor 1-beta from Methanococcus vannielii (strain ATCC 35089 / DSM 1224 / JCM 13029 / OCM 148 / SB).